The primary structure comprises 212 residues: uncharacterized protein (212 aa).

Positions 46 to 198 constitute an SIS domain; the sequence is LERVYREKRK…IYSLMTRLGI (153 aa).

This sequence belongs to the SIS family. PHI subfamily.

This is an uncharacterized protein from Aeropyrum pernix (strain ATCC 700893 / DSM 11879 / JCM 9820 / NBRC 100138 / K1).